Reading from the N-terminus, the 201-residue chain is Orotidine 5'-phosphate decarboxylase (201 aa).

Residues Asp8, Lys26, 52 to 61 (DLKFCDIPST), Thr106, Arg153, Gln161, Gly180, and Arg181 contribute to the substrate site. The active-site Proton donor is Lys54.

This sequence belongs to the OMP decarboxylase family. Type 1 subfamily. In terms of assembly, homodimer.

The enzyme catalyses orotidine 5'-phosphate + H(+) = UMP + CO2. The protein operates within pyrimidine metabolism; UMP biosynthesis via de novo pathway; UMP from orotate: step 2/2. In terms of biological role, catalyzes the decarboxylation of orotidine 5'-monophosphate (OMP) to uridine 5'-monophosphate (UMP). This is Orotidine 5'-phosphate decarboxylase (pyrF) from Thermotoga maritima (strain ATCC 43589 / DSM 3109 / JCM 10099 / NBRC 100826 / MSB8).